We begin with the raw amino-acid sequence, 474 residues long: Proline--tRNA ligase (474 aa).

The protein belongs to the class-II aminoacyl-tRNA synthetase family. ProS type 3 subfamily. As to quaternary structure, homodimer.

Its subcellular location is the cytoplasm. The enzyme catalyses tRNA(Pro) + L-proline + ATP = L-prolyl-tRNA(Pro) + AMP + diphosphate. Its function is as follows. Catalyzes the attachment of proline to tRNA(Pro) in a two-step reaction: proline is first activated by ATP to form Pro-AMP and then transferred to the acceptor end of tRNA(Pro). The polypeptide is Proline--tRNA ligase (Aster yellows witches'-broom phytoplasma (strain AYWB)).